Reading from the N-terminus, the 382-residue chain is Sphingoid long-chain base transporter RSB1 (382 aa).

Topologically, residues M1 to R34 are extracellular. N-linked (GlcNAc...) asparagine glycosylation is found at N3 and N6. A helical transmembrane segment spans residues F35–L55. The Cytoplasmic portion of the chain corresponds to M56–R57. A helical membrane pass occupies residues Q58–G78. Topologically, residues R79–D90 are extracellular. The chain crosses the membrane as a helical span at residues A91 to Y111. Residues Y112 to S135 are Cytoplasmic-facing. Residues F136–C156 form a helical membrane-spanning segment. Residues G157–H171 lie on the Extracellular side of the membrane. The helical transmembrane segment at V172–F192 threads the bilayer. At H193–R241 the chain is on the cytoplasmic side. Residues W242–C262 form a helical membrane-spanning segment. Residues C263–E281 are Extracellular-facing. Residues W282–F302 form a helical membrane-spanning segment. The Cytoplasmic segment spans residues H303–L382.

It belongs to the lipid-translocating exporter (LTE) (TC 9.A.26.1) family.

The protein localises to the cell membrane. Catalyzes the ATP-dependent translocation of sphingoid long-chain bases (LCBs) from the cytoplasmic site toward the extracytoplasmic side of the membrane (flip-flop). Involved in the establishment of the functional lipid asymmetry of the plasma membrane. Regulates intracellular levels of LCBs, sphingolipid precursors that are growth inhibitory at increased levels. This Saccharomyces cerevisiae (strain ATCC 204508 / S288c) (Baker's yeast) protein is Sphingoid long-chain base transporter RSB1 (RSB1).